The following is a 101-amino-acid chain: uncharacterized protein (101 aa).

Positions 1 to 21 are cleaved as a signal peptide; sequence MKLSTCCAALLLALASPAVLA. Polar residues predominate over residues 79–94; it reads RTTSGNVSAPAQSSQD. The segment at 79 to 101 is disordered; the sequence is RTTSGNVSAPAQSSQDGAPAEPQ.

This is an uncharacterized protein from Escherichia coli (strain K12).